Here is a 432-residue protein sequence, read N- to C-terminus: Serine hydroxymethyltransferase (432 aa).

(6S)-5,6,7,8-tetrahydrofolate contacts are provided by residues Leu-127 and 131 to 133 (GHL). At Lys-236 the chain carries N6-(pyridoxal phosphate)lysine.

This sequence belongs to the SHMT family. As to quaternary structure, homodimer. The cofactor is pyridoxal 5'-phosphate.

Its subcellular location is the cytoplasm. It carries out the reaction (6R)-5,10-methylene-5,6,7,8-tetrahydrofolate + glycine + H2O = (6S)-5,6,7,8-tetrahydrofolate + L-serine. Its pathway is one-carbon metabolism; tetrahydrofolate interconversion. The protein operates within amino-acid biosynthesis; glycine biosynthesis; glycine from L-serine: step 1/1. In terms of biological role, catalyzes the reversible interconversion of serine and glycine with tetrahydrofolate (THF) serving as the one-carbon carrier. This reaction serves as the major source of one-carbon groups required for the biosynthesis of purines, thymidylate, methionine, and other important biomolecules. Also exhibits THF-independent aldolase activity toward beta-hydroxyamino acids, producing glycine and aldehydes, via a retro-aldol mechanism. The polypeptide is Serine hydroxymethyltransferase (Rhizobium johnstonii (strain DSM 114642 / LMG 32736 / 3841) (Rhizobium leguminosarum bv. viciae)).